The primary structure comprises 577 residues: Torulene dioxygenase (577 aa).

The disordered stretch occupies residues 1–20 (MALNGPGVYHRTREHEQEDA). Fe(2+) is bound by residues His-239, His-291, His-361, and His-570.

It belongs to the carotenoid oxygenase family. Requires Fe(2+) as cofactor.

It is found in the cytoplasm. The protein localises to the cytosol. The enzyme catalyses torulene + O2 = 4'-apo-beta-carotenal + 3-methyl-2-butenal. It participates in carotenoid biosynthesis. Functionally, torulene dioxygenase; part of pathway that mediates the biosynthesis of neurosporaxanthin, a carboxylic apocarotenoid acting as an essential protective pigments and leading to orange pigmentation. CarT mediates the cleavage of torulene into beta-apo-4'-carotenal, the aldehyde corresponding to the acidic neurosporaxanthin. Is also active on other monocyclic synthetic substrates such as beta-apo-8'-carotenal and beta-apo-10'-carotenal to produce beta-apo-14'-carotenal and retinal(beta-apo-15'-carotenal), respectively. Neurosporaxanthin is synthesized from geranyl-geranyl pyrophosphate (GGPP) through several enzymatic activities. Phytoene synthase activity performed by the bifunctional enzyme carAR first produces phytoene from geranyl-geranyl pyrophosphate (GGPP). The phytoene dehydrogenase carB then introduces 4 desaturations to lead to lycopene which is substrate of the carotene cyclase activity of carAR that leads to the production of gamma-carotene. CarB then performs a 5th desaturation reaction to yield torulene. Torulene is the substrate of the dioxidase carT that breaks the molecule, removing five carbon atoms to yield beta-apo-4'-carotenal, whereas the aldehyde dehydrogenase carD mediates the last step by converting beta-apo-4'-carotenal into neurosporaxanthin. In Gibberella fujikuroi (strain CBS 195.34 / IMI 58289 / NRRL A-6831) (Bakanae and foot rot disease fungus), this protein is Torulene dioxygenase.